The chain runs to 297 residues: HTH-type transcriptional regulator ArgP (297 aa).

The region spanning 4–60 (PDYRTLQALDAVIRERGFERAAQKLCITQSAVSQRIKQLENLFGQPLLVRTVPPRPT) is the HTH lysR-type domain. A DNA-binding region (H-T-H motif) is located at residues 21-40 (FERAAQKLCITQSAVSQRIK).

Belongs to the LysR transcriptional regulatory family. As to quaternary structure, homodimer.

Its function is as follows. Controls the transcription of genes involved in arginine and lysine metabolism. This chain is HTH-type transcriptional regulator ArgP, found in Yersinia enterocolitica serotype O:8 / biotype 1B (strain NCTC 13174 / 8081).